The chain runs to 131 residues: Small ribosomal subunit protein uS8 (131 aa).

Belongs to the universal ribosomal protein uS8 family. In terms of assembly, part of the 30S ribosomal subunit. Contacts proteins S5 and S12.

Functionally, one of the primary rRNA binding proteins, it binds directly to 16S rRNA central domain where it helps coordinate assembly of the platform of the 30S subunit. The protein is Small ribosomal subunit protein uS8 of Hamiltonella defensa subsp. Acyrthosiphon pisum (strain 5AT).